The chain runs to 103 residues: Large ribosomal subunit protein bL21 (103 aa).

It belongs to the bacterial ribosomal protein bL21 family. In terms of assembly, part of the 50S ribosomal subunit. Contacts protein L20.

In terms of biological role, this protein binds to 23S rRNA in the presence of protein L20. The sequence is that of Large ribosomal subunit protein bL21 from Haemophilus influenzae (strain ATCC 51907 / DSM 11121 / KW20 / Rd).